The sequence spans 87 residues: Small ribosomal subunit protein bS18 (87 aa).

The segment covering 1–10 (MAGKSSGDRR) has biased composition (basic and acidic residues). The disordered stretch occupies residues 1–23 (MAGKSSGDRRKLLRGAKVGKNAA).

It belongs to the bacterial ribosomal protein bS18 family. As to quaternary structure, part of the 30S ribosomal subunit. Forms a tight heterodimer with protein bS6.

Its function is as follows. Binds as a heterodimer with protein bS6 to the central domain of the 16S rRNA, where it helps stabilize the platform of the 30S subunit. The polypeptide is Small ribosomal subunit protein bS18 (Clavibacter sepedonicus (Clavibacter michiganensis subsp. sepedonicus)).